Reading from the N-terminus, the 279-residue chain is Dermonecrotic toxin LspiSicTox-betaIE3i (279 aa).

His5 is a catalytic residue. Mg(2+) contacts are provided by Glu25 and Asp27. His41 (nucleophile) is an active-site residue. Intrachain disulfides connect Cys45-Cys51 and Cys47-Cys190. Asp85 provides a ligand contact to Mg(2+).

It belongs to the arthropod phospholipase D family. Class II subfamily. It depends on Mg(2+) as a cofactor. As to expression, expressed by the venom gland.

Its subcellular location is the secreted. It catalyses the reaction an N-(acyl)-sphingosylphosphocholine = an N-(acyl)-sphingosyl-1,3-cyclic phosphate + choline. The enzyme catalyses an N-(acyl)-sphingosylphosphoethanolamine = an N-(acyl)-sphingosyl-1,3-cyclic phosphate + ethanolamine. It carries out the reaction a 1-acyl-sn-glycero-3-phosphocholine = a 1-acyl-sn-glycero-2,3-cyclic phosphate + choline. The catalysed reaction is a 1-acyl-sn-glycero-3-phosphoethanolamine = a 1-acyl-sn-glycero-2,3-cyclic phosphate + ethanolamine. Dermonecrotic toxins cleave the phosphodiester linkage between the phosphate and headgroup of certain phospholipids (sphingolipid and lysolipid substrates), forming an alcohol (often choline) and a cyclic phosphate. This toxin acts on sphingomyelin (SM). It may also act on ceramide phosphoethanolamine (CPE), lysophosphatidylcholine (LPC) and lysophosphatidylethanolamine (LPE), but not on lysophosphatidylserine (LPS), and lysophosphatidylglycerol (LPG). It acts by transphosphatidylation, releasing exclusively cyclic phosphate products as second products. Induces dermonecrosis, hemolysis, increased vascular permeability, edema, inflammatory response, and platelet aggregation. The chain is Dermonecrotic toxin LspiSicTox-betaIE3i from Loxosceles spinulosa (Recluse spider).